The primary structure comprises 295 residues: Small ribosomal subunit protein uS2B (295 aa).

Serine 2 bears the N-acetylserine mark. An interaction with PPP1R16B region spans residues 54 to 113 (TWEKLLLAARAIVAIENPADVSVISSRNTGQRAVLKFAAATGATPIAGRFTPGTFTNQIQ). Laminin-binding regions lie at residues 161–180 (IPCNNKGAHSVGLMWWMLAR) and 205–229 (RDPEEIEKEEQAAAEKAVTKEEFQG). The span at 218-227 (AEKAVTKEEF) shows a compositional bias: basic and acidic residues. The disordered stretch occupies residues 218–242 (AEKAVTKEEFQGEWTAPSPEFTATQ). [DE]-W-[ST] repeat units lie at residues 230–232 (EWT), 247–249 (DWS), 266–268 (DWS), 275–277 (DWS), and 293–295 (DWS). The segment at 242 to 295 (QPEVADWSEGVQVPSVPIQQFPTEDWSAQPATEDWSAAPTAQATEWVGATTDWS) is laminin-binding. A disordered region spans residues 266–295 (DWSAQPATEDWSAAPTAQATEWVGATTDWS).

The protein belongs to the universal ribosomal protein uS2 family. In terms of assembly, monomer (37LRP) and homodimer (67LR). Component of the small ribosomal subunit. Mature ribosomes consist of a small (40S) and a large (60S) subunit. The 40S subunit contains about 33 different proteins and 1 molecule of RNA (18S). The 60S subunit contains about 49 different proteins and 3 molecules of RNA (28S, 5.8S and 5S). Interacts with RPS21. Interacts with several laminins including at least LAMB1. Interacts with MDK. The mature dimeric form interacts with PPP1R16B (via its fourth ankyrin repeat). Interacts with PPP1CA only in the presence of PPP1R16B. In terms of processing, acylated. Acylation may be a prerequisite for conversion of the monomeric 37 kDa laminin receptor precursor (37LRP) to the mature dimeric 67 kDa laminin receptor (67LR), and may provide a mechanism for membrane association. Cleaved by stromelysin-3 (ST3) at the cell surface. Cleavage by stromelysin-3 may be a mechanism to alter cell-extracellular matrix interactions.

Its subcellular location is the cell membrane. It localises to the cytoplasm. The protein resides in the nucleus. Functionally, required for the assembly and/or stability of the 40S ribosomal subunit. Required for the processing of the 20S rRNA-precursor to mature 18S rRNA in a late step of the maturation of 40S ribosomal subunits. Also functions as a cell surface receptor for laminin. Plays a role in cell adhesion to the basement membrane and in the consequent activation of signaling transduction pathways. May play a role in cell fate determination and tissue morphogenesis. Also acts as a receptor for several other ligands, including the pathogenic prion protein, viruses, and bacteria. Acts as a PPP1R16B-dependent substrate of PPP1CA. This Homo sapiens (Human) protein is Small ribosomal subunit protein uS2B.